We begin with the raw amino-acid sequence, 412 residues long: Argininosuccinate synthase (412 aa).

ATP is bound by residues Ala-10–Ser-18 and Ala-36. Residues Tyr-87 and Ser-92 each contribute to the L-citrulline site. Tyr-87 is subject to Phosphotyrosine. Lys-112 carries the post-translational modification N6-acetyllysine. Tyr-113 carries the phosphotyrosine modification. Residue Ser-115–Asn-123 participates in ATP binding. Residues Thr-119, Asn-123, and Asp-124 each contribute to the L-aspartate site. Asn-123 contacts L-citrulline. Arg-127 provides a ligand contact to L-citrulline. N6-acetyllysine; by CLOCK occurs at positions 165 and 176. Ser-177 and Ser-180 each carry phosphoserine. Positions 180 and 189 each coordinate L-citrulline. Phosphothreonine is present on Thr-219. L-citrulline-binding residues include Glu-270 and Tyr-282.

It belongs to the argininosuccinate synthase family. Type 1 subfamily. Homotetramer. Interacts with NMRAL1. Interacts with CLOCK; in a circadian manner. Forms tissue-specific complexes with ASL, SLC7A1, HSP90AA1 and nitric oxide synthase NOS1, NOS2 or NOS3; the complex regulates cell-autonomous L-arginine synthesis and citrulline recycling while channeling extracellular L-arginine to nitric oxide synthesis pathway. Post-translationally, acetylated by CLOCK in a circadian manner which negatively regulates its enzyme activity. Deacetylated by histone deacetylases.

Its subcellular location is the cytoplasm. It localises to the cytosol. The enzyme catalyses L-citrulline + L-aspartate + ATP = 2-(N(omega)-L-arginino)succinate + AMP + diphosphate + H(+). It functions in the pathway amino-acid biosynthesis; L-arginine biosynthesis; L-arginine from L-ornithine and carbamoyl phosphate: step 2/3. It participates in nitrogen metabolism; urea cycle; (N(omega)-L-arginino)succinate from L-aspartate and L-citrulline: step 1/1. In terms of biological role, one of the enzymes of the urea cycle, the metabolic pathway transforming neurotoxic amonia produced by protein catabolism into inocuous urea in the liver of ureotelic animals. Catalyzes the formation of arginosuccinate from aspartate, citrulline and ATP and together with ASL it is responsible for the biosynthesis of arginine in most body tissues. Indirectly, may be involved in the control of blood pressure. In Rattus norvegicus (Rat), this protein is Argininosuccinate synthase.